The chain runs to 133 residues: uncharacterized protein (133 aa).

The Response regulatory domain occupies Arg-9–Leu-128. Asp-64 bears the 4-aspartylphosphate mark.

This is an uncharacterized protein from Mycobacterium tuberculosis (strain CDC 1551 / Oshkosh).